The sequence spans 488 residues: Putative sugar transporter ERD6-like 13 (488 aa).

A run of 12 helical transmembrane segments spans residues 51-71, 89-109, 116-138, 151-171, 182-202, 207-227, 291-311, 324-344, 353-373, 390-410, 423-445, and 451-471; these read LILL…GTAA, LAEF…GAAM, VFGR…LMIA, LFLG…IVEI, AINS…GSVI, LALI…FIPE, VGIG…TFYL, VGVM…IVIV, LTVA…SFLF, GVLV…WVMI, GTLC…NFLF, and GVFF…MKMV.

It belongs to the major facilitator superfamily. Sugar transporter (TC 2.A.1.1) family.

It localises to the membrane. Its function is as follows. Sugar transporter. This chain is Putative sugar transporter ERD6-like 13, found in Arabidopsis thaliana (Mouse-ear cress).